Here is a 165-residue protein sequence, read N- to C-terminus: Phosphopantetheine adenylyltransferase (165 aa).

Residue Thr9 coordinates substrate. ATP is bound by residues 9-10 (TF) and His17. Substrate is bound by residues Lys41, Leu73, and Arg87. Residues 88–90 (GLR), Glu98, and 123–129 (YQFISGT) contribute to the ATP site.

Belongs to the bacterial CoaD family. Homohexamer. Mg(2+) is required as a cofactor.

It is found in the cytoplasm. The catalysed reaction is (R)-4'-phosphopantetheine + ATP + H(+) = 3'-dephospho-CoA + diphosphate. Its pathway is cofactor biosynthesis; coenzyme A biosynthesis; CoA from (R)-pantothenate: step 4/5. In terms of biological role, reversibly transfers an adenylyl group from ATP to 4'-phosphopantetheine, yielding dephospho-CoA (dPCoA) and pyrophosphate. The chain is Phosphopantetheine adenylyltransferase from Burkholderia lata (strain ATCC 17760 / DSM 23089 / LMG 22485 / NCIMB 9086 / R18194 / 383).